The primary structure comprises 437 residues: Protein translocase subunit SecY (437 aa).

10 helical membrane passes run 19–39 (LFTLGIIVVYRLGTHIPIPGV), 69–89 (LLQITVFALGIMPYITASIIL), 122–142 (VALAILQGTGLVATARSGALF), 157–177 (IFTTVVMVICMTAGTCVVMWL), 189–209 (GMSILMFISIAATFPSALWAI), 219–239 (WIEFGTVILVGLVMVGLVVFV), 275–295 (GVIPVIFASSLLYIPALIVQF), 318–338 (HIILYFFLIVFFAFFYVAISF), 378–398 (GSLYLGLIALVPTMALAGFGA), and 400–420 (QNFPFGGTSILIIVGVGLETV).

It belongs to the SecY/SEC61-alpha family. As to quaternary structure, component of the Sec protein translocase complex. Heterotrimer consisting of SecY, SecE and SecG subunits. The heterotrimers can form oligomers, although 1 heterotrimer is thought to be able to translocate proteins. Interacts with the ribosome. Interacts with SecDF, and other proteins may be involved. Interacts with SecA.

The protein resides in the cell membrane. Its function is as follows. The central subunit of the protein translocation channel SecYEG. Consists of two halves formed by TMs 1-5 and 6-10. These two domains form a lateral gate at the front which open onto the bilayer between TMs 2 and 7, and are clamped together by SecE at the back. The channel is closed by both a pore ring composed of hydrophobic SecY resides and a short helix (helix 2A) on the extracellular side of the membrane which forms a plug. The plug probably moves laterally to allow the channel to open. The ring and the pore may move independently. This is Protein translocase subunit SecY from Streptomyces coelicolor (strain ATCC BAA-471 / A3(2) / M145).